The sequence spans 410 residues: uncharacterized protein (410 aa).

Polar residues predominate over residues 178-187 (QKNHRNQLST). Disordered stretches follow at residues 178 to 203 (QKNH…QEHQ) and 236 to 272 (RAEQ…PTVQ). Residues 188-198 (QKKQQQALQKA) are compositionally biased toward low complexity. Positions 236-263 (RAEQAAREQEKREREALAQRQKAEEKRT) are enriched in basic and acidic residues.

This is an uncharacterized protein from Haemophilus influenzae (strain ATCC 51907 / DSM 11121 / KW20 / Rd).